The following is a 132-amino-acid chain: Large ribosomal subunit protein bL12 (132 aa).

Residues 112 to 132 (KEAADKAKTQLEGAGGTINLK) form a disordered region.

It belongs to the bacterial ribosomal protein bL12 family. In terms of assembly, homodimer. Part of the ribosomal stalk of the 50S ribosomal subunit. Forms a multimeric L10(L12)X complex, where L10 forms an elongated spine to which 2 to 4 L12 dimers bind in a sequential fashion. Binds GTP-bound translation factors.

In terms of biological role, forms part of the ribosomal stalk which helps the ribosome interact with GTP-bound translation factors. Is thus essential for accurate translation. The protein is Large ribosomal subunit protein bL12 of Leifsonia xyli subsp. xyli (strain CTCB07).